A 645-amino-acid polypeptide reads, in one-letter code: UvrABC system protein C (645 aa).

Positions 1–20 (MTDLPPHSSHHPADQGEPLV) are disordered. Positions 40–118 (YSPGVYRMLS…IKRMKPRFNI (79 aa)) constitute a GIY-YIG domain. The 36-residue stretch at 228 to 263 (TELQQRLVAEMEQASQELNYERAASIRDRIRGFASI) folds into the UVR domain.

This sequence belongs to the UvrC family. As to quaternary structure, interacts with UvrB in an incision complex.

The protein resides in the cytoplasm. Functionally, the UvrABC repair system catalyzes the recognition and processing of DNA lesions. UvrC both incises the 5' and 3' sides of the lesion. The N-terminal half is responsible for the 3' incision and the C-terminal half is responsible for the 5' incision. The protein is UvrABC system protein C of Gluconobacter oxydans (strain 621H) (Gluconobacter suboxydans).